We begin with the raw amino-acid sequence, 509 residues long: Scavenger receptor class B member 1 (509 aa).

Residues Met1–Thr11 are Cytoplasmic-facing. Residues Ala12–Val32 traverse the membrane as a helical segment. The Extracellular portion of the chain corresponds to Pro33–Val440. N-linked (GlcNAc...) asparagine glycans are attached at residues Asn102, Asn108, Asn173, Asn212, Asn227, Asn255, Asn310, Asn330, and Asn383. An intrachain disulfide couples Cys251 to Cys384. The chain crosses the membrane as a helical span at residues Leu441–Ile461. The Cytoplasmic portion of the chain corresponds to Tyr462 to Leu509.

Belongs to the CD36 family. Post-translationally, N-glycosylated. The six cysteines of the extracellular domain are all involved in intramolecular disulfide bonds.

The protein resides in the cell membrane. The protein localises to the membrane. It localises to the caveola. Its function is as follows. Receptor for different ligands such as phospholipids, cholesterol ester, lipoproteins, phosphatidylserine and apoptotic cells. Receptor for HDL, mediating selective uptake of cholesteryl ether and HDL-dependent cholesterol efflux. Also facilitates the flux of free and esterified cholesterol between the cell surface and apoB-containing lipoproteins and modified lipoproteins, although less efficiently than HDL. May be involved in the phagocytosis of apoptotic cells, via its phosphatidylserine binding activity. The sequence is that of Scavenger receptor class B member 1 (SCARB1) from Bos taurus (Bovine).